Reading from the N-terminus, the 188-residue chain is Elongation factor P (188 aa).

The protein belongs to the elongation factor P family.

The protein localises to the cytoplasm. Its pathway is protein biosynthesis; polypeptide chain elongation. Involved in peptide bond synthesis. Stimulates efficient translation and peptide-bond synthesis on native or reconstituted 70S ribosomes in vitro. Probably functions indirectly by altering the affinity of the ribosome for aminoacyl-tRNA, thus increasing their reactivity as acceptors for peptidyl transferase. This Phocaeicola vulgatus (strain ATCC 8482 / DSM 1447 / JCM 5826 / CCUG 4940 / NBRC 14291 / NCTC 11154) (Bacteroides vulgatus) protein is Elongation factor P.